A 401-amino-acid polypeptide reads, in one-letter code: Beta-ketoadipyl-CoA thiolase (401 aa).

The Acyl-thioester intermediate role is filled by Cys90. Catalysis depends on proton acceptor residues His357 and Cys387.

This sequence belongs to the thiolase-like superfamily. Thiolase family.

The enzyme catalyses succinyl-CoA + acetyl-CoA = 3-oxoadipyl-CoA + CoA. It functions in the pathway aromatic compound metabolism; beta-ketoadipate pathway; acetyl-CoA and succinyl-CoA from 3-oxoadipate: step 2/2. In terms of biological role, catalyzes thiolytic cleavage of beta-ketoadipyl-CoA to succinyl-CoA and acetyl-CoA. In Acinetobacter baylyi (strain ATCC 33305 / BD413 / ADP1), this protein is Beta-ketoadipyl-CoA thiolase (catF).